The chain runs to 260 residues: (R)-2-hydroxyglutaryl-CoA dehydratase activating ATPase (260 aa).

12–16 contributes to the ATP binding site; that stretch reads STASK. The [4Fe-4S] cluster site is built by Cys127 and Cys166. 2 residues coordinate ATP: Gln220 and Gln243.

The protein belongs to the HgdC family. Homodimer. [4Fe-4S] cluster serves as cofactor. It depends on Mg(2+) as a cofactor.

The enzyme catalyses ATP + H2O = ADP + phosphate + H(+). It functions in the pathway amino-acid degradation; L-glutamate degradation via hydroxyglutarate pathway; crotonoyl-CoA from L-glutamate: step 4/5. Inactivated by exposure to air within less than 15 minutes. Functionally, involved in the fermentation of L-glutamate via the hydroxyglutarate pathway. HgdC (CompA) has a very low ATPase activity, whose the role is to activate dehydratase HgdA-HgdB complex and then maintain an appropriate redox state via an ATP-dependent electron transfer. The dehydratase requires only catalytic amounts of ATP and substoichiometric amounts of HgdC (CompA) to be functional. In Acidaminococcus fermentans (strain ATCC 25085 / DSM 20731 / CCUG 9996 / CIP 106432 / VR4), this protein is (R)-2-hydroxyglutaryl-CoA dehydratase activating ATPase.